The primary structure comprises 96 residues: Putative defensin-like protein 263 (96 aa).

An N-terminal signal peptide occupies residues 1-26; it reads MEKTSLKLVFLFSLTVIALCLSLSAA. Intrachain disulfides connect Cys48/Cys96, Cys67/Cys86, Cys73/Cys91, and Cys77/Cys93.

This sequence belongs to the DEFL family.

It localises to the secreted. In Arabidopsis thaliana (Mouse-ear cress), this protein is Putative defensin-like protein 263.